The chain runs to 201 residues: Holliday junction branch migration complex subunit RuvA (201 aa).

Residues 1-63 (MIEYVRGELA…EDAYVLYGFA (63 aa)) are domain I. The tract at residues 64–142 (DKQEREIFLL…TMGATVAGGS (79 aa)) is domain II. The interval 143–151 (ASAGMLLQS) is flexible linker. A domain III region spans residues 152–201 (ASVEVQEEAVAALTMLGFAAAPSQKVVLAILKEEPDAPVEKVIKLALKRL).

It belongs to the RuvA family. As to quaternary structure, homotetramer. Forms an RuvA(8)-RuvB(12)-Holliday junction (HJ) complex. HJ DNA is sandwiched between 2 RuvA tetramers; dsDNA enters through RuvA and exits via RuvB. An RuvB hexamer assembles on each DNA strand where it exits the tetramer. Each RuvB hexamer is contacted by two RuvA subunits (via domain III) on 2 adjacent RuvB subunits; this complex drives branch migration. In the full resolvosome a probable DNA-RuvA(4)-RuvB(12)-RuvC(2) complex forms which resolves the HJ.

It localises to the cytoplasm. Its function is as follows. The RuvA-RuvB-RuvC complex processes Holliday junction (HJ) DNA during genetic recombination and DNA repair, while the RuvA-RuvB complex plays an important role in the rescue of blocked DNA replication forks via replication fork reversal (RFR). RuvA specifically binds to HJ cruciform DNA, conferring on it an open structure. The RuvB hexamer acts as an ATP-dependent pump, pulling dsDNA into and through the RuvAB complex. HJ branch migration allows RuvC to scan DNA until it finds its consensus sequence, where it cleaves and resolves the cruciform DNA. This chain is Holliday junction branch migration complex subunit RuvA, found in Bacteroides thetaiotaomicron (strain ATCC 29148 / DSM 2079 / JCM 5827 / CCUG 10774 / NCTC 10582 / VPI-5482 / E50).